The following is a 533-amino-acid chain: Flavin-dependent halogenase gsfI (533 aa).

The FAD site is built by glycine 14, glycine 17, and glutamate 47. Serine 331 and glycine 332 together coordinate chloride.

Belongs to the flavin-dependent halogenase family.

The catalysed reaction is griseophenone C + FADH2 + chloride + O2 = griseophenone B + FAD + 2 H2O + H(+). Its pathway is secondary metabolite biosynthesis; terpenoid biosynthesis. In terms of biological role, flavin-dependent halogenase; part of the gene cluster that mediates the biosynthesis of griseofulvin, an important antifungal drug that has been in use for a long time for treating dermatophyte infections. The first step of the pathway is the formation of the heptaketide backbone by gsfA which is initiated by priming with acetyl-CoA, followed by sequential condensations of 6 malonyl-CoA units. The resulting benzophenone can undergo a spontaneous dehydration to form norlichexanthone. However, the true precursor for the griseofulvin biosynthesis is not norlichexanthone, but the heptaketide benzophenone that is O-methylated at 3-OH by gsfB to produce griseophenone D which is further methylated at 9-OH by gsfC to yield griseophenone C. Griseophenone C is then substrate of halogenase gsfI which is responsible for the regio-specific chlorination at the C13 position to form griseophenone B. The cytochrome P450 gsfF catalyzes the coupling of orcinol and phloroglucinol rings in griseophenone B to form desmethyl-dehydrogriseofulvin A which is further methylated at 5-OH by gsfD to yield dehydrogriseofulvin. Finally, gsfE performs stereospecific reduction of enone 18 of dehydrogriseofulvin to afford the final product griseofulvin. This is Flavin-dependent halogenase gsfI from Penicillium aethiopicum.